The primary structure comprises 799 residues: Rho GTPase-activating protein gacI (799 aa).

In terms of domain architecture, Rho-GAP spans 226–451 (IKLEEVFARE…LLVEHVLTIF (226 aa)). Over residues 472-520 (RSQSDISSQTKPLPSLPTSPQNRSAIITGDSSSPSLNTPPVKSSLNSSD) the composition is skewed to polar residues. Disordered stretches follow at residues 472-572 (RSQS…PTSN) and 741-799 (EKQQ…LSNQ). The span at 525-549 (DNGSNNNNNNNTTNTITNNGIADTA) shows a compositional bias: low complexity. Positions 550 to 568 (TPPPPTTPTAPTTPPPPTT) are enriched in pro residues. Composition is skewed to low complexity over residues 743 to 752 (QQQQQQQQTN) and 759 to 791 (ISSN…LNSS).

It is found in the cytoplasm. In terms of biological role, rho GTPase-activating protein involved in the signal transduction pathway. The polypeptide is Rho GTPase-activating protein gacI (gacI) (Dictyostelium discoideum (Social amoeba)).